The chain runs to 117 residues: Large ribosomal subunit protein bL20 (117 aa).

Belongs to the bacterial ribosomal protein bL20 family.

Its function is as follows. Binds directly to 23S ribosomal RNA and is necessary for the in vitro assembly process of the 50S ribosomal subunit. It is not involved in the protein synthesizing functions of that subunit. The polypeptide is Large ribosomal subunit protein bL20 (Magnetococcus marinus (strain ATCC BAA-1437 / JCM 17883 / MC-1)).